Consider the following 277-residue polypeptide: Sulfur carrier protein FdhD (277 aa).

Cys-121 serves as the catalytic Cysteine persulfide intermediate. 260 to 265 (FCKPGR) is a Mo-bis(molybdopterin guanine dinucleotide) binding site.

This sequence belongs to the FdhD family.

The protein localises to the cytoplasm. In terms of biological role, required for formate dehydrogenase (FDH) activity. Acts as a sulfur carrier protein that transfers sulfur from IscS to the molybdenum cofactor prior to its insertion into FDH. The protein is Sulfur carrier protein FdhD of Escherichia coli O6:K15:H31 (strain 536 / UPEC).